A 590-amino-acid chain; its full sequence is ATP-dependent zinc metalloprotease FtsH 1 (590 aa).

At 1–8 the chain is on the cytoplasmic side; the sequence is MLKLTKKQ. The chain crosses the membrane as a helical span at residues 9–29; it reads LIIVLGIAIVVVSAIGYAVYT. Residues 30 to 103 are Extracellular-facing; the sequence is QYFNEDKLEI…QVRETTDQYS (74 aa). A helical membrane pass occupies residues 104–124; it reads VVQVITFVVLIGGFIGVAIFL. Over 125–590 the chain is Cytoplasmic; sequence SKKNATQTSK…NEIFSGFQSM (466 aa). Residue 195 to 202 coordinates ATP; sequence GSPGTGKT. His-418 provides a ligand contact to Zn(2+). Glu-419 is a catalytic residue. Positions 422 and 496 each coordinate Zn(2+).

This sequence in the central section; belongs to the AAA ATPase family. It in the C-terminal section; belongs to the peptidase M41 family. In terms of assembly, homohexamer. Requires Zn(2+) as cofactor.

Its subcellular location is the cell membrane. Acts as a processive, ATP-dependent zinc metallopeptidase for both cytoplasmic and membrane proteins. Plays a role in the quality control of integral membrane proteins. The polypeptide is ATP-dependent zinc metalloprotease FtsH 1 (Alkaliphilus metalliredigens (strain QYMF)).